The following is an 82-amino-acid chain: Small ribosomal subunit protein uS17 (82 aa).

Belongs to the universal ribosomal protein uS17 family. As to quaternary structure, part of the 30S ribosomal subunit.

Functionally, one of the primary rRNA binding proteins, it binds specifically to the 5'-end of 16S ribosomal RNA. This is Small ribosomal subunit protein uS17 from Rickettsia typhi (strain ATCC VR-144 / Wilmington).